Consider the following 272-residue polypeptide: Small ribosomal subunit protein mS23 (272 aa).

The segment at 236–272 is disordered; sequence AGATGGAKEESDPAILPELEVAESTSESAQPAEIRTG.

Belongs to the mitochondrion-specific ribosomal protein mS23 family. As to quaternary structure, component of the mitochondrial small ribosomal subunit.

The protein localises to the mitochondrion. The polypeptide is Small ribosomal subunit protein mS23 (RSM25) (Coccidioides immitis (strain RS) (Valley fever fungus)).